The sequence spans 20 residues: Mu-conotoxin SIIIB (20 aa).

Q1 carries the pyrrolidone carboxylic acid modification. Cystine bridges form between C3-C13, C4-C19, and C8-C20. C20 carries the post-translational modification Cysteine amide.

As to expression, expressed by the venom duct.

It is found in the secreted. Functionally, mu-conotoxins block voltage-gated sodium channels (VGSC). Potently displaces (125)I-TIIIA from native rat brain Nav1.2/SCN2A (IC(50) is 5 nM) and muscle Nav1.4/SCN4A (IC(50) is 3 nM) VGSCs. Potently and irreversibly inhibits current through Xenopus oocyte-expressed Nav1.2/SCN2A and Nav1.4/SCN4A. The sequence is that of Mu-conotoxin SIIIB from Conus striatus (Striated cone).